The chain runs to 622 residues: Polyamine transporter 3 (622 aa).

The segment covering Met1–Leu47 has biased composition (polar residues). Residues Met1–Ser76 form a disordered region. Residues Met1–Thr182 are Cytoplasmic-facing. Ser55 is subject to Phosphoserine. Thr98 bears the Phosphothreonine mark. 2 positions are modified to phosphoserine: Ser101 and Ser132. The tract at residues Thr105–Asp152 is disordered. A helical transmembrane segment spans residues Val183–Leu203. Residues Gly204–Glu215 lie on the Extracellular side of the membrane. A helical membrane pass occupies residues Ala216 to Ser236. At Pro237–Arg245 the chain is on the cytoplasmic side. Residues Val246–Pro266 form a helical membrane-spanning segment. Residues Asn267–Arg275 are Extracellular-facing. The helical transmembrane segment at Phe276 to Met296 threads the bilayer. Topologically, residues Phe297–Ala305 are cytoplasmic. A helical transmembrane segment spans residues Ile306–Phe326. At Ile327–Asp335 the chain is on the extracellular side. Residues Leu336–Pro356 form a helical membrane-spanning segment. Residues Glu357–Cys416 are Cytoplasmic-facing. The chain crosses the membrane as a helical span at residues Phe417–Phe437. The Extracellular segment spans residues Gly438 to Asn446. The chain crosses the membrane as a helical span at residues Leu447–Phe467. Over Tyr468 to Arg487 the chain is Cytoplasmic. The helical transmembrane segment at Leu488–Thr508 threads the bilayer. The Extracellular portion of the chain corresponds to Ala509–His512. The helical transmembrane segment at Ile513–Tyr533 threads the bilayer. At Tyr534–Ser550 the chain is on the cytoplasmic side. The chain crosses the membrane as a helical span at residues Ala551–Ile571. The Extracellular portion of the chain corresponds to Gln572–Ser583. The helical transmembrane segment at Trp584–Gly604 threads the bilayer. Over Lys605–Glu622 the chain is Cytoplasmic.

The protein belongs to the major facilitator superfamily. DHA1 family. Polyamines/proton antiporter (TC 2.A.1.2.16) subfamily.

It is found in the cell membrane. Its function is as follows. Cell membrane polyamine/proton antiporter, involved in the detoxification of excess polyamines in the cytoplasm. Recognizes spermine, but not spermidine. The sequence is that of Polyamine transporter 3 (TPO3) from Saccharomyces cerevisiae (strain ATCC 204508 / S288c) (Baker's yeast).